The following is an 87-amino-acid chain: DNA-directed RNA polymerase subunit omega (87 aa).

Belongs to the RNA polymerase subunit omega family. In terms of assembly, the RNAP catalytic core consists of 2 alpha, 1 beta, 1 beta' and 1 omega subunit. When a sigma factor is associated with the core the holoenzyme is formed, which can initiate transcription.

The enzyme catalyses RNA(n) + a ribonucleoside 5'-triphosphate = RNA(n+1) + diphosphate. Its function is as follows. Promotes RNA polymerase assembly. Latches the N- and C-terminal regions of the beta' subunit thereby facilitating its interaction with the beta and alpha subunits. The sequence is that of DNA-directed RNA polymerase subunit omega from Thioalkalivibrio sulfidiphilus (strain HL-EbGR7).